The primary structure comprises 507 residues: UDP-N-acetylglucosamine 1-carboxyvinyltransferase 1 (507 aa).

41-42 (KN) provides a ligand contact to phosphoenolpyruvate. Residue Arg112 coordinates UDP-N-acetyl-alpha-D-glucosamine. The Proton donor role is filled by Cys136. Position 136 is a 2-(S-cysteinyl)pyruvic acid O-phosphothioketal (Cys136). UDP-N-acetyl-alpha-D-glucosamine is bound by residues 141–145 (RPIDL), Asp328, and Leu350.

The protein belongs to the EPSP synthase family. MurA subfamily.

The protein localises to the cytoplasm. The enzyme catalyses phosphoenolpyruvate + UDP-N-acetyl-alpha-D-glucosamine = UDP-N-acetyl-3-O-(1-carboxyvinyl)-alpha-D-glucosamine + phosphate. The protein operates within cell wall biogenesis; peptidoglycan biosynthesis. Functionally, cell wall formation. Adds enolpyruvyl to UDP-N-acetylglucosamine. The sequence is that of UDP-N-acetylglucosamine 1-carboxyvinyltransferase 1 from Legionella pneumophila (strain Lens).